A 198-amino-acid polypeptide reads, in one-letter code: Protoplast secreted protein 2 (198 aa).

A signal peptide spans 1–21; sequence MPRVAIIIYTLYGHVAATAEA. The Flavodoxin-like domain maps to 22-191; sequence EKKGIEAAGG…QVHEIQGKTF (170 aa).

Belongs to the WrbA family.

It is found in the secreted. This chain is Protoplast secreted protein 2 (PST2), found in Saccharomyces cerevisiae (strain ATCC 204508 / S288c) (Baker's yeast).